We begin with the raw amino-acid sequence, 1001 residues long: 2-oxoglutarate dehydrogenase E1 component (1001 aa).

It belongs to the alpha-ketoglutarate dehydrogenase family. As to quaternary structure, homodimer. Part of the 2-oxoglutarate dehydrogenase (OGDH) complex composed of E1 (2-oxoglutarate dehydrogenase), E2 (dihydrolipoamide succinyltransferase) and E3 (dihydrolipoamide dehydrogenase); the complex contains multiple copies of the three enzymatic components (E1, E2 and E3). Thiamine diphosphate is required as a cofactor.

It catalyses the reaction N(6)-[(R)-lipoyl]-L-lysyl-[protein] + 2-oxoglutarate + H(+) = N(6)-[(R)-S(8)-succinyldihydrolipoyl]-L-lysyl-[protein] + CO2. E1 component of the 2-oxoglutarate dehydrogenase (OGDH) complex which catalyzes the decarboxylation of 2-oxoglutarate, the first step in the conversion of 2-oxoglutarate to succinyl-CoA and CO(2). The sequence is that of 2-oxoglutarate dehydrogenase E1 component from Brucella anthropi (strain ATCC 49188 / DSM 6882 / CCUG 24695 / JCM 21032 / LMG 3331 / NBRC 15819 / NCTC 12168 / Alc 37) (Ochrobactrum anthropi).